We begin with the raw amino-acid sequence, 263 residues long: Microtubule-associated protein RP/EB family member 1 (263 aa).

Residues asparagine 14 to aspartate 116 enclose the Calponin-homology (CH) domain. Residues lysine 180–isoleucine 250 enclose the EB1 C-terminal domain.

Belongs to the MAPRE family.

It localises to the cytoplasm. Its subcellular location is the cytoskeleton. It is found in the microtubule organizing center. The protein localises to the centrosome. The protein resides in the golgi apparatus. It localises to the spindle. Its subcellular location is the spindle pole. Functionally, plus-end tracking protein (+TIP) that binds to the plus-end of microtubules and regulates the dynamics of the microtubule cytoskeleton. Promotes cytoplasmic microtubule nucleation and elongation. Involved in mitotic spindle positioning by stabilizing microtubules and promoting dynamic connection between astral microtubules and the cortex during mitotic chromosome segregation. The protein is Microtubule-associated protein RP/EB family member 1 (MAPRE1) of Coturnix coturnix (Common quail).